The primary structure comprises 72 residues: DNA-directed RNA polymerase subunit epsilon (72 aa).

This sequence belongs to the RNA polymerase subunit epsilon family. In terms of assembly, RNAP is composed of a core of 2 alpha, a beta and a beta' subunit. The core is associated with a delta subunit, and at least one of epsilon or omega. When a sigma factor is associated with the core the holoenzyme is formed, which can initiate transcription.

The enzyme catalyses RNA(n) + a ribonucleoside 5'-triphosphate = RNA(n+1) + diphosphate. Functionally, a non-essential component of RNA polymerase (RNAP). This is DNA-directed RNA polymerase subunit epsilon from Staphylococcus aureus (strain JH1).